Reading from the N-terminus, the 549-residue chain is Coiled-coil domain-containing protein 102A (549 aa).

Disordered stretches follow at residues 1-61 (MSHG…TAPA), 135-195 (LAGA…GSQE), and 207-248 (PEEP…EEDA). S12, S26, and S28 each carry phosphoserine. The segment covering 37 to 55 (SLPPTPPSGTPSPGPPPSL) has biased composition (pro residues). Positions 69 to 160 (ESREELRLRE…ARGRELARLR (92 aa)) form a coiled coil. 2 stretches are compositionally biased toward basic and acidic residues: residues 135–158 (LAGARRERQEAQGECEARGRELAR) and 165–187 (AADKTHDGPEPEREQEPVRDIGA). 2 coiled-coil regions span residues 263–398 (KVLL…NASA) and 426–517 (KLKK…NAPL). 2 disordered regions span residues 472–496 (ELDEAHNQARKLQRSLDEQTEQSEN) and 509–549 (RRQQ…IQVA). Residues 530–549 (EAGDGASDLDEDEDLQIQVA) are compositionally biased toward acidic residues. S536 is modified (phosphoserine).

This Mus musculus (Mouse) protein is Coiled-coil domain-containing protein 102A (Ccdc102a).